The sequence spans 334 residues: Anthranilate phosphoribosyltransferase (334 aa).

Residues G79, 82-83 (GD), S87, 89-92 (NIST), 107-115 (KHGNRSISS), and S119 contribute to the 5-phospho-alpha-D-ribose 1-diphosphate site. G79 contacts anthranilate. S91 contacts Mg(2+). N110 provides a ligand contact to anthranilate. An anthranilate-binding site is contributed by R165. D224 and E225 together coordinate Mg(2+).

The protein belongs to the anthranilate phosphoribosyltransferase family. As to quaternary structure, homodimer. It depends on Mg(2+) as a cofactor.

It catalyses the reaction N-(5-phospho-beta-D-ribosyl)anthranilate + diphosphate = 5-phospho-alpha-D-ribose 1-diphosphate + anthranilate. It functions in the pathway amino-acid biosynthesis; L-tryptophan biosynthesis; L-tryptophan from chorismate: step 2/5. In terms of biological role, catalyzes the transfer of the phosphoribosyl group of 5-phosphorylribose-1-pyrophosphate (PRPP) to anthranilate to yield N-(5'-phosphoribosyl)-anthranilate (PRA). This is Anthranilate phosphoribosyltransferase from Streptococcus pneumoniae (strain ATCC 700669 / Spain 23F-1).